Reading from the N-terminus, the 66-residue chain is Large ribosomal subunit protein uL29 (66 aa).

It belongs to the universal ribosomal protein uL29 family.

The sequence is that of Large ribosomal subunit protein uL29 from Ruegeria sp. (strain TM1040) (Silicibacter sp.).